We begin with the raw amino-acid sequence, 826 residues long: MFDIPYQVPSRRTFLSLSALSAIAIAASPEMPDAFASPDPDIWSALCEKWTDIITGRNAAKTADPRARAIIAKTDKRVATILTDLASSSSRTTVLLSANLQKEESSFITTTARAISSIACAWATPGSAYHAEPHVLSACIDALKDFCRLRYHPSQDEYGNWWDWEDGASRAIGDVMCILHDALPTDVMAAAAAGIDHFVPDPWYQQPESVKPTAHPTQPVISTGANRMDLTRAVICRSIATGDESKLRHAVQGLPDSWRTVAEGDGFRADGGFIQHSHVPYTGSYGDVLLSGLAMLLPLVAGTRFDITDSAQANLLSQVERGIVPVMYGGQILDCVRGRSISRIDEPAAMHGMSIARSMLLMANAIPAHRAELWRGTVHGWMTRNTFDHLSEPASLRDIDLFDTAANVRPIPESSTPTYFASIDRLVHRTPNWLIAVSNCSNRISWYEYGNSENEWASRTSQGMRYLMLPEDMGQYEDGFWATVDYSAPTGTTVDSTPLKRAVGTAWAERTPDNEWSGGLASGEWSAAASQITSQDSTLKARRLWVGLKDALLELTTDVSTDASKATTVVEHRKVGKTPPELLVDGITITSKTSFDNPHWAHLRGVGGYVFATDVDLTAQLEKRKGSWIDVNPARTVKGFNEAIERNYASLHVTHHNRPVAWAVLPTASRSQTMALAQRPVDNLFIVLSNDRMVQAVRSTGCLLTKDPTVVTTYAFWKPATCAGMTADAPAIIQTQAQGSRVEVIMSEPTQKRPSLTVAIEGVWTVENSSDRISVSRSDKTTTLRINTADLGGQSIRVTLSPALPKPTKPSLRASSYPLGLPHTSS.

A signal peptide (tat-type signal) is located at residues 1–36; sequence MFDIPYQVPSRRTFLSLSALSAIAIAASPEMPDAFA. Active-site residues include His276, Tyr285, and Arg339. Residues 800-826 form a disordered region; it reads LSPALPKPTKPSLRASSYPLGLPHTSS.

It belongs to the polysaccharide lyase 8 family. In terms of processing, predicted to be exported by the Tat system. The position of the signal peptide cleavage has not been experimentally proven.

It is found in the secreted. The catalysed reaction is [hyaluronan](n) = n 3-(4-deoxy-beta-D-gluc-4-enuronosyl)-N-acetyl-D-glucosamine + H2O. Its function is as follows. Degrades hyaluronic acid (HA) into large-sized HA oligosaccharides, including tetrasaccharide HA (HA-4), hexasaccharide HA (HA-6) and higher molecular weight HA, and to a lesser extent into HA disaccharides (HA-2). Involved in the pathogenesis of acne. HA degradation products induce secretion of proinflammatory cytokines (IL-6, IL-8 and TNF-alpha) from human HaCaT keratinocyte cell line and from mouse bone marrow derived macrophages (BMDMs). Produced HA fragments also direct robust TLR2-dependent inflammation in the mouse model of acne. This is Hyaluronate lyase HylA from Cutibacterium acnes (Propionibacterium acnes).